Reading from the N-terminus, the 145-residue chain is D-aminoacyl-tRNA deacylase (145 aa).

Residues 137 to 138 (GP) carry the Gly-cisPro motif, important for rejection of L-amino acids motif.

Belongs to the DTD family. As to quaternary structure, homodimer.

The protein resides in the cytoplasm. The catalysed reaction is glycyl-tRNA(Ala) + H2O = tRNA(Ala) + glycine + H(+). The enzyme catalyses a D-aminoacyl-tRNA + H2O = a tRNA + a D-alpha-amino acid + H(+). Its function is as follows. An aminoacyl-tRNA editing enzyme that deacylates mischarged D-aminoacyl-tRNAs. Also deacylates mischarged glycyl-tRNA(Ala), protecting cells against glycine mischarging by AlaRS. Acts via tRNA-based rather than protein-based catalysis; rejects L-amino acids rather than detecting D-amino acids in the active site. By recycling D-aminoacyl-tRNA to D-amino acids and free tRNA molecules, this enzyme counteracts the toxicity associated with the formation of D-aminoacyl-tRNA entities in vivo and helps enforce protein L-homochirality. In Sodalis glossinidius (strain morsitans), this protein is D-aminoacyl-tRNA deacylase.